A 404-amino-acid polypeptide reads, in one-letter code: Glycosylated lysosomal membrane protein (404 aa).

The N-terminal stretch at methionine 1–alanine 26 is a signal peptide. The Lumenal portion of the chain corresponds to alanine 27 to glycine 370. N-linked (GlcNAc...) asparagine glycans are attached at residues asparagine 63, asparagine 132, asparagine 157, asparagine 185, and asparagine 228. A helical transmembrane segment spans residues isoleucine 371–leucine 391. Topologically, residues leucine 392–asparagine 404 are cytoplasmic. The Lysosomal targeting motif signature appears at tyrosine 400 to asparagine 404.

Belongs to the GLMP family. Interacts (via lumenal domain) with lysosomal protein MFSD1; the interaction starts while both proteins are still in the endoplasmic reticulum and is required for stabilization of MFSD1 in lysosomes but has no direct effect on its targeting to lysosomes or transporter activity. Highly N-glycosylated. N-glycosylation is essential for GLMP stability and for MFSD1 lysosomal localization.

The protein localises to the lysosome membrane. Functionally, required to protect lysosomal transporter MFSD1 from lysosomal proteolysis and for MFSD1 lysosomal localization. The polypeptide is Glycosylated lysosomal membrane protein (Bos taurus (Bovine)).